Reading from the N-terminus, the 541-residue chain is T-complex protein 1 subunit epsilon (541 aa).

Position 2 is an N-acetylalanine (Ala2). Residue Lys20 forms a Glycyl lysine isopeptide (Lys-Gly) (interchain with G-Cter in SUMO2) linkage. Ser26 is modified (phosphoserine). Residue Gly53 coordinates ADP. Gly53 is a binding site for ATP. Asp104 contributes to the Mg(2+) binding site. ADP contacts are provided by Gly105, Thr106, Thr107, and Ser175. 2 residues coordinate ATP: Thr106 and Thr107. Glycyl lysine isopeptide (Lys-Gly) (interchain with G-Cter in SUMO2) cross-links involve residues Lys210, Lys214, Lys265, Lys275, and Lys279. Ser346 is modified (phosphoserine). A Glycyl lysine isopeptide (Lys-Gly) (interchain with G-Cter in SUMO2) cross-link involves residue Lys392. 4 residues coordinate ADP: Gly422, Asp492, Glu508, and Lys513. An ATP-binding site is contributed by Gly422. Ser539 bears the Phosphoserine mark.

This sequence belongs to the TCP-1 chaperonin family. Component of the chaperonin-containing T-complex (TRiC), a hexadecamer composed of two identical back-to-back stacked rings enclosing a protein folding chamber. Each ring is made up of eight different subunits: TCP1/CCT1, CCT2, CCT3, CCT4, CCT5, CCT6A/CCT6, CCT7, CCT8. Interacts with PACRG. Interacts with DNAAF4. Interacts with DLEC1. Interacts with SPMAP2. Ubiquitinated by the DCX(DCAF12) complex specifically recognizes the diglutamate (Glu-Glu) at the C-terminus, leading to its degradation.

It localises to the cytoplasm. Its subcellular location is the cytoskeleton. The protein localises to the microtubule organizing center. The protein resides in the centrosome. The catalysed reaction is ATP + H2O = ADP + phosphate + H(+). Its function is as follows. Component of the chaperonin-containing T-complex (TRiC), a molecular chaperone complex that assists the folding of actin, tubulin and other proteins upon ATP hydrolysis. The TRiC complex mediates the folding of WRAP53/TCAB1, thereby regulating telomere maintenance. As part of the TRiC complex may play a role in the assembly of BBSome, a complex involved in ciliogenesis regulating transports vesicles to the cilia. In Rattus norvegicus (Rat), this protein is T-complex protein 1 subunit epsilon (Cct5).